The following is a 114-amino-acid chain: Hydrogenase maturation factor HypA (114 aa).

His-2 contributes to the Ni(2+) binding site. Residues Cys-70, Cys-73, Cys-86, and Cys-89 each contribute to the Zn(2+) site.

Belongs to the HypA/HybF family.

Functionally, involved in the maturation of [NiFe] hydrogenases. Required for nickel insertion into the metal center of the hydrogenase. In Rippkaea orientalis (strain PCC 8801 / RF-1) (Cyanothece sp. (strain PCC 8801)), this protein is Hydrogenase maturation factor HypA.